A 367-amino-acid polypeptide reads, in one-letter code: tRNA (guanine(26)-N(2))-dimethyltransferase (367 aa).

The 365-residue stretch at methionine 1–threonine 365 folds into the Trm1 methyltransferase domain. The S-adenosyl-L-methionine site is built by arginine 34, arginine 64, aspartate 79, aspartate 105, and alanine 106. Residues cysteine 234, cysteine 237, cysteine 254, and cysteine 257 each coordinate Zn(2+).

Belongs to the class I-like SAM-binding methyltransferase superfamily. Trm1 family.

It carries out the reaction guanosine(26) in tRNA + 2 S-adenosyl-L-methionine = N(2)-dimethylguanosine(26) in tRNA + 2 S-adenosyl-L-homocysteine + 2 H(+). In terms of biological role, dimethylates a single guanine residue at position 26 of a number of tRNAs using S-adenosyl-L-methionine as donor of the methyl groups. The protein is tRNA (guanine(26)-N(2))-dimethyltransferase of Haloarcula marismortui (strain ATCC 43049 / DSM 3752 / JCM 8966 / VKM B-1809) (Halobacterium marismortui).